A 516-amino-acid polypeptide reads, in one-letter code: L-amino acid oxidase bordonein-L (516 aa).

Residues 1 to 18 (MNVFFMFSLLFLAALGSC) form the signal peptide. Cysteine 28 and cysteine 189 form a disulfide bridge. Residues 61-62 (MA), 81-82 (EA), arginine 89, and 103-106 (GPMR) each bind FAD. Positions 106 and 239 each coordinate substrate. Valine 279 is a binding site for FAD. An intrachain disulfide couples cysteine 349 to cysteine 430. Residue asparagine 379 is glycosylated (N-linked (GlcNAc...) asparagine). Tyrosine 390 lines the substrate pocket. Residues glutamate 475 and 482–487 (GWIDST) contribute to the FAD site. 482–483 (GW) is a substrate binding site.

Homodimer; non-covalently linked. The cofactor is FAD. N-glycosylated. N-glycan probably consists of the disaccharide N-acetylglucosamine-fucose (HexNAc-Fuc). As to expression, expressed by the venom gland.

The protein localises to the secreted. The catalysed reaction is an L-alpha-amino acid + O2 + H2O = a 2-oxocarboxylate + H2O2 + NH4(+). It catalyses the reaction L-leucine + O2 + H2O = 4-methyl-2-oxopentanoate + H2O2 + NH4(+). It carries out the reaction L-phenylalanine + O2 + H2O = 3-phenylpyruvate + H2O2 + NH4(+). The enzyme catalyses L-tryptophan + O2 + H2O = indole-3-pyruvate + H2O2 + NH4(+). The catalysed reaction is L-methionine + O2 + H2O = 4-methylsulfanyl-2-oxobutanoate + H2O2 + NH4(+). It catalyses the reaction L-isoleucine + O2 + H2O = (S)-3-methyl-2-oxopentanoate + H2O2 + NH4(+). It carries out the reaction L-arginine + O2 + H2O = 5-guanidino-2-oxopentanoate + H2O2 + NH4(+). The enzyme catalyses L-histidine + O2 + H2O = 3-(imidazol-5-yl)pyruvate + H2O2 + NH4(+). Its function is as follows. Catalyzes an oxidative deamination of predominantly hydrophobic and aromatic L-amino acids, thus producing hydrogen peroxide that may contribute to the diverse toxic effects of this enzyme. Is highly active on L-Met, L-Leu, L-Trp, and L-Phe, moderately active on L-Ile, L-His, and L-Arg, and weakly or not active on L-Gln, L-Val, L-Asn, L-Ala, L-Lys, L-Ser, L-Thr, L-Pro, L-Asp, L-Gly, L-Tyr, L-Cys and L-Glu. This enzyme exhibits diverse biological activities, such as hemorrhage, hemolysis, edema, apoptosis of vascular endothelial cells or tumor cell lines, antibacterial and antiparasitic activities, as well as regulation of platelet aggregation. Its effect on platelets is controversial, since it either induces aggregation or inhibits agonist-induced aggregation. These different effects are probably due to different experimental conditions. In vitro, the enzyme exhibits cytotoxicity against fibroblast cell line and kills Leishmania amazonensis promastigotes, intensified by substrate addition. The chain is L-amino acid oxidase bordonein-L from Crotalus durissus terrificus (South American rattlesnake).